Reading from the N-terminus, the 408-residue chain is Indian hedgehog protein (408 aa).

A signal peptide spans 1–23 (MKPARLLLLLSGCALLLAPAVRC). Residue C24 is the site of N-palmitoyl cysteine attachment. Ca(2+) contacts are provided by E90, E91, D96, T126, E127, D130, and D132. The Zn(2+) site is built by H141, D148, and H183. A lipid anchor (Cholesterol glycine ester) is attached at G198.

The protein belongs to the hedgehog family. Multimer. In terms of assembly, interacts with BOC and CDON. Interacts with PTCH1. Interacts with glypican GPC3. In terms of processing, cholesterylation is required for N-product targeting to lipid rafts and multimerization. Post-translationally, the C-terminal domain displays an autoproteolysis activity and a cholesterol transferase activity. Both activities result in the cleavage of the full-length protein and covalent attachment of a cholesterol moiety to the C-terminal of the newly generated N-product. The N-product is the active species in both local and long-range signaling, whereas the C-product is degraded in the endoplasmic reticulum. N-palmitoylation by HHAT of N-product is required for indian hedgehog protein N-product multimerization and full activity. In terms of tissue distribution, expressed in developing midgut, lung and cartilage of developing long bones in the limb.

The protein localises to the cell membrane. Its subcellular location is the endoplasmic reticulum membrane. The protein resides in the golgi apparatus membrane. It is found in the secreted. The enzyme catalyses glycyl-L-cysteinyl-[protein] + cholesterol + H(+) = [protein]-C-terminal glycyl cholesterol ester + N-terminal L-cysteinyl-[protein]. Functionally, plays a role in embryonic morphogenesis; it is involved in the regulation of endochondral skeleton formation, and the development of retinal pigment epithelium (RPE), photoreceptors and periocular tissues. The C-terminal part of the indian hedgehog protein precursor displays an autoproteolysis and a cholesterol transferase activity. Both activities result in the cleavage of the full-length protein into two parts followed by the covalent attachment of a cholesterol moiety to the C-terminal of the newly generated N-product. Both activities occur in the endoplasmic reticulum. Its function is as follows. The dually lipidated indian hedgehog protein N-product is a morphogen which is essential for a variety of patterning events during development. Binds to the patched (PTCH1) receptor, which functions in association with smoothened (SMO), to activate the transcription of target genes. Plays a role in morphogenesis of the skeleton by coordinating growth and differentiation of the endochondral skeleton. Positively regulates PTHLH expression during endochondral bone formation preventing chondrocyte hypertrophy. In contrast, participates in normal chondrocyte proliferation in a PTHLH-independent pathway. This chain is Indian hedgehog protein, found in Gallus gallus (Chicken).